The sequence spans 249 residues: Proteasome subunit alpha (249 aa).

This sequence belongs to the peptidase T1A family. As to quaternary structure, the 20S proteasome core is composed of 14 alpha and 14 beta subunits that assemble into four stacked heptameric rings, resulting in a barrel-shaped structure. The two inner rings, each composed of seven catalytic beta subunits, are sandwiched by two outer rings, each composed of seven alpha subunits. The catalytic chamber with the active sites is on the inside of the barrel. Has a gated structure, the ends of the cylinder being occluded by the N-termini of the alpha-subunits. Is capped at one or both ends by the proteasome regulatory ATPase, PAN.

It is found in the cytoplasm. The formation of the proteasomal ATPase PAN-20S proteasome complex, via the docking of the C-termini of PAN into the intersubunit pockets in the alpha-rings, triggers opening of the gate for substrate entry. Interconversion between the open-gate and close-gate conformations leads to a dynamic regulation of the 20S proteasome proteolysis activity. Functionally, component of the proteasome core, a large protease complex with broad specificity involved in protein degradation. In Methanosarcina barkeri (strain Fusaro / DSM 804), this protein is Proteasome subunit alpha.